A 222-amino-acid chain; its full sequence is Protein-L-isoaspartate O-methyltransferase (222 aa).

The active site involves Ser68.

Belongs to the methyltransferase superfamily. L-isoaspartyl/D-aspartyl protein methyltransferase family.

Its subcellular location is the cytoplasm. The enzyme catalyses [protein]-L-isoaspartate + S-adenosyl-L-methionine = [protein]-L-isoaspartate alpha-methyl ester + S-adenosyl-L-homocysteine. Catalyzes the methyl esterification of L-isoaspartyl residues in peptides and proteins that result from spontaneous decomposition of normal L-aspartyl and L-asparaginyl residues. It plays a role in the repair and/or degradation of damaged proteins. In Koribacter versatilis (strain Ellin345), this protein is Protein-L-isoaspartate O-methyltransferase.